We begin with the raw amino-acid sequence, 361 residues long: Velvet complex subunit B (361 aa).

2 disordered regions span residues 1 to 36 (MYAV…SLRQ) and 308 to 340 (NGAP…VLLR). Positions 23–35 (PSVQYPSGTTSLR) are enriched in polar residues. Positions 47–353 (QDGRSWSLQV…SASALRYRVS (307 aa)) constitute a Velvet domain. The span at 323–336 (SLNPSRSSPPKSSP) shows a compositional bias: low complexity.

Belongs to the velvet family. VelB subfamily. Component of the heterotrimeric velvet complex composed of laeA, veA and velB; VeA acting as a bridging protein between laeA and velB. Interacts with velA. Forms a heterodimeric complex with vosA; the formation of the velB-vosA complex is light-dependent. Interacts with vosA.

It is found in the nucleus. Its subcellular location is the cytoplasm. Functionally, component of the velvet transcription factor complex that controls sexual/asexual developmental ratio in response to light, promoting sexual development in the darkness while stimulating asexual sporulation under illumination. The velvet complex acts as a global regulator for secondary metabolite gene expression. Component of the velB-VosA heterodimeric complex that plays a dual role in activating genes associated with spore maturation and repressing certain development-associated genes. The velB-VosA complex binds DNA through the DNA-binding domain of vosA that recognizes an 11-nucleotide consensus sequence 5'-CTGGCCGCGGC-3' consisting of two motifs in the promoters of key developmental regulatory genes. Controls conidiophore formation. The sequence is that of Velvet complex subunit B from Penicillium rubens (strain ATCC 28089 / DSM 1075 / NRRL 1951 / Wisconsin 54-1255) (Penicillium chrysogenum).